The chain runs to 130 residues: MNLVFLWAALGGAIGSSLRYFVGKMMPSKFLMFESFPLGTFSVNLIGCFIIGFMGHLAAKKVFGDDFGIFFVTGVLGGFTTFSSYGLDTLKLLQKSQYLEAISYVLGTNLLGLIGVAIGWFLAKNFVGVN.

Transmembrane regions (helical) follow at residues Leu3–Gly23, Leu38–Ala58, Phe67–Leu87, and Ile102–Leu122. Gly77 and Thr80 together coordinate Na(+).

The protein belongs to the fluoride channel Fluc/FEX (TC 1.A.43) family.

It is found in the cell inner membrane. It carries out the reaction fluoride(in) = fluoride(out). With respect to regulation, na(+) is not transported, but it plays an essential structural role and its presence is essential for fluoride channel function. Fluoride-specific ion channel. Important for reducing fluoride concentration in the cell, thus reducing its toxicity. The protein is Fluoride-specific ion channel FluC of Helicobacter pylori (strain J99 / ATCC 700824) (Campylobacter pylori J99).